We begin with the raw amino-acid sequence, 601 residues long: HIRA-interacting protein 3 (601 aa).

Disordered regions lie at residues 60 to 469 (KMQA…EDHP) and 546 to 601 (STGR…GDSS). Residues 66–76 (GTREGKPDFIK) are compositionally biased toward basic and acidic residues. Ser85, Ser96, and Ser98 each carry phosphoserine. Low complexity predominate over residues 97 to 113 (ESESSSSPSSPDGSGPS). Over residues 117–129 (RTTKKTCLRRALK) the composition is skewed to basic residues. Residues 130 to 149 (KAVESTDEDHQTDLDAKMGL) are compositionally biased toward basic and acidic residues. Phosphoserine is present on Ser134. Phosphothreonine occurs at positions 135 and 141. Phosphoserine is present on residues Ser152, Ser153, and Ser163. The residue at position 167 (Thr167) is a Phosphothreonine. The segment covering 186–205 (GAKDKQVPLKADRKQVREES) has biased composition (basic and acidic residues). Residues Ser205, Ser207, Ser208, Ser231, Ser234, Ser238, Ser313, Ser359, Ser360, Ser384, and Ser389 each carry the phosphoserine modification. Basic and acidic residues-rich tracts occupy residues 238–264 (SPAKKKELSEPRSRSNRAERTARERKS) and 313–324 (SSEKGEAEKEEG). Positions 347 to 378 (RTQTESGRRQNTSSRDDSNSTQEQAAAQGTTK) are enriched in polar residues. Over residues 379 to 388 (SGSLGSSNGD) the composition is skewed to low complexity. Phosphothreonine is present on Thr391. Residues Ser396 and Ser398 each carry the phosphoserine modification. Positions 413-432 (SNKSSKNGQARSCSSSSDSS) are enriched in low complexity. The interval 429–572 (SDSSPEPTGQ…TSPGETYRRT (144 aa)) is interaction with the histone H2A-H2B complex. Polar residues predominate over residues 556–566 (WNPSGEGTSPG). 5 positions are modified to phosphoserine: Ser564, Ser575, Ser595, Ser596, and Ser600. The span at 568-580 (TYRRTLDSEEEQP) shows a compositional bias: basic and acidic residues.

Interacts (via C-terminus) with histone H2A-H2B dimers; the interaction is direct. Interacts with HIRA. Interacts with CK2. In terms of processing, phosphorylated by CK2.

Its subcellular location is the nucleus. In terms of biological role, histone chaperone that carries a H2A-H2B histone complex and facilitates its deposition onto chromatin. In Mus musculus (Mouse), this protein is HIRA-interacting protein 3.